The following is a 116-amino-acid chain: Bacterial microcompartment shell protein CutR (116 aa).

The 99-residue stretch at 10-108 (RIIQESVPGK…LEYFKNSLGF (99 aa)) folds into the BMC circularly permuted domain.

It belongs to the EutS/PduU family. As to quaternary structure, has been crystallized in 5 structures (all are mutated, 3 have an N-terminal His-tag), most are homohexameric with a central pore. In two the homohexamer lies flat with a beta-barrel on the flat face created by the protruding N termini of the six chains. In 2 others the hexamer is not flat but has a six-fold screw axis; the screw pitch is 33.8 or 41.9 Angstroms depending on the structure. Interacts with the BMC major shell protein.

It is found in the bacterial microcompartment. It functions in the pathway amine and polyamine metabolism; choline degradation. Functionally, a minor shell protein of the choline degradation-specific bacterial microcompartment (BMC). Proteins such as this one with circularly permuted BMC domains may play a key role in conferring heterogeneity and flexibility in this BMC. This chain is Bacterial microcompartment shell protein CutR, found in Streptococcus intermedius (strain ATCC 27335 / DSM 20573 / CCUG 32759 / CIP 103248 / JCM 12996 / LMG 17840 / NCTC 11324 / SK54 / 1877).